The following is a 233-amino-acid chain: Cytochrome c biogenesis ATP-binding export protein CcmA (233 aa).

The region spanning 17 to 233 is the ABC transporter domain; it reads FAGEDLLCVR…AAGLFLEDEG (217 aa). 49–56 lines the ATP pocket; it reads GPNGSGKS.

The protein belongs to the ABC transporter superfamily. CcmA exporter (TC 3.A.1.107) family. The complex is composed of two ATP-binding proteins (CcmA) and two transmembrane proteins (CcmB).

The protein resides in the cell inner membrane. It catalyses the reaction heme b(in) + ATP + H2O = heme b(out) + ADP + phosphate + H(+). In terms of biological role, part of the ABC transporter complex CcmAB involved in the biogenesis of c-type cytochromes; once thought to export heme, this seems not to be the case, but its exact role is uncertain. Responsible for energy coupling to the transport system. The chain is Cytochrome c biogenesis ATP-binding export protein CcmA from Rhodospirillum rubrum (strain ATCC 11170 / ATH 1.1.1 / DSM 467 / LMG 4362 / NCIMB 8255 / S1).